The chain runs to 609 residues: Manganese lipoxygenase (609 aa).

An N-terminal signal peptide occupies residues 1–16 (MRLLLSIAGLTTVVNA). N-linked (GlcNAc...) asparagine glycosylation is found at Asn-24, Asn-115, Asn-156, and Asn-193. A Lipoxygenase domain is found at 117–609 (SLKAIQDHGG…PGVIPFYLSV (493 aa)). 2 residues coordinate Mn(2+): His-289 and His-294. N-linked (GlcNAc...) asparagine glycosylation is present at Asn-385. Mn(2+) contacts are provided by His-474 and Asn-478. Asn-539 carries an N-linked (GlcNAc...) asparagine glycan. Val-609 provides a ligand contact to Mn(2+).

Belongs to the lipoxygenase family. Manganese lipoxygenase subfamily. Mn(2+) is required as a cofactor. In terms of processing, N- and O-glycosylated.

The protein resides in the secreted. It catalyses the reaction (9Z,12Z)-octadecadienoate + O2 = (9S)-hydroperoxy-(10E,12Z)-octadecadienoate. The catalysed reaction is (9Z,12Z)-octadecadienoate + O2 = (11S)-hydroperoxy-(9Z,12Z)-octadecadienoate. The enzyme catalyses (9Z,12Z)-octadecadienoate + O2 = (13R)-hydroperoxy-(9Z,11E)-octadecadienoate. It carries out the reaction (9Z,12Z,15Z)-octadecatrienoate + O2 = (11R)-hydroperoxy-(9Z,12Z,15Z)-octadecatrienoate. Lipoxygenase that metabolizes linoleic and alpha-linolenic acids to 9-, 11- and 13-hydroperoxy fatty acids. Oxidizes linoleic acid to mainly 9S- and 13R-HPODE and alpha-linolenic acid to 11R-HPOTrE. This Colletotrichum gloeosporioides (strain Cg-14) (Anthracnose fungus) protein is Manganese lipoxygenase.